The following is a 477-amino-acid chain: Ribulose bisphosphate carboxylase large chain (477 aa).

Positions Met-1–Ser-2 are excised as a propeptide. An N-acetylproline modification is found at Pro-3. The residue at position 14 (Lys-14) is an N6,N6,N6-trimethyllysine. Residues Asn-123 and Thr-173 each contribute to the substrate site. Catalysis depends on Lys-175, which acts as the Proton acceptor. Lys-177 contacts substrate. Residues Lys-201, Asp-203, and Glu-204 each contribute to the Mg(2+) site. The residue at position 201 (Lys-201) is an N6-carboxylysine. His-294 (proton acceptor) is an active-site residue. Positions 295, 327, and 379 each coordinate substrate.

Belongs to the RuBisCO large chain family. Type I subfamily. In terms of assembly, heterohexadecamer of 8 large chains and 8 small chains; disulfide-linked. The disulfide link is formed within the large subunit homodimers. It depends on Mg(2+) as a cofactor. In terms of processing, the disulfide bond which can form in the large chain dimeric partners within the hexadecamer appears to be associated with oxidative stress and protein turnover.

Its subcellular location is the plastid. It localises to the chloroplast. It carries out the reaction 2 (2R)-3-phosphoglycerate + 2 H(+) = D-ribulose 1,5-bisphosphate + CO2 + H2O. The enzyme catalyses D-ribulose 1,5-bisphosphate + O2 = 2-phosphoglycolate + (2R)-3-phosphoglycerate + 2 H(+). In terms of biological role, ruBisCO catalyzes two reactions: the carboxylation of D-ribulose 1,5-bisphosphate, the primary event in carbon dioxide fixation, as well as the oxidative fragmentation of the pentose substrate in the photorespiration process. Both reactions occur simultaneously and in competition at the same active site. In Agrostis stolonifera (Creeping bentgrass), this protein is Ribulose bisphosphate carboxylase large chain.